Here is a 394-residue protein sequence, read N- to C-terminus: Chorismate synthase (394 aa).

Arg40 and Arg46 together coordinate NADP(+). FMN-binding positions include 135 to 137, 255 to 256, Gly302, 317 to 321, and Arg343; these read RAS, QA, and KPISS.

The protein belongs to the chorismate synthase family. In terms of assembly, homotetramer. FMNH2 serves as cofactor.

The enzyme catalyses 5-O-(1-carboxyvinyl)-3-phosphoshikimate = chorismate + phosphate. Its pathway is metabolic intermediate biosynthesis; chorismate biosynthesis; chorismate from D-erythrose 4-phosphate and phosphoenolpyruvate: step 7/7. Its function is as follows. Catalyzes the anti-1,4-elimination of the C-3 phosphate and the C-6 proR hydrogen from 5-enolpyruvylshikimate-3-phosphate (EPSP) to yield chorismate, which is the branch point compound that serves as the starting substrate for the three terminal pathways of aromatic amino acid biosynthesis. This reaction introduces a second double bond into the aromatic ring system. The protein is Chorismate synthase of Frankia alni (strain DSM 45986 / CECT 9034 / ACN14a).